A 93-amino-acid polypeptide reads, in one-letter code: Kunitz-type serine protease inhibitor 3 (93 aa).

Residues Met-1–Thr-24 form the signal peptide. In terms of domain architecture, BPTI/Kunitz inhibitor spans Cys-31 to Cys-81. Intrachain disulfides connect Cys-31-Cys-81, Cys-40-Cys-64, and Cys-56-Cys-77. A propeptide spanning residues Ile-90–Asn-93 is cleaved from the precursor.

It belongs to the venom Kunitz-type family. As to expression, expressed by the venom gland.

The protein localises to the secreted. Functionally, serine protease inhibitor that principally inhibits alpha-chymotrypsin (Ki=4.3 nM). Shows weak inhibition on trypsin (Ki=5100 nM), and plasma kallikrein. The protein is Kunitz-type serine protease inhibitor 3 of Vipera ammodytes ammodytes (Western sand viper).